The primary structure comprises 478 residues: Pyruvate kinase (478 aa).

Arginine 35 lines the substrate pocket. Residues asparagine 37, serine 39, and aspartate 69 each contribute to the K(+) site. 37-40 is a binding site for ATP; it reads NMSH. Arginine 76 and lysine 157 together coordinate ATP. Glutamate 219 contacts Mg(2+). Glycine 242, aspartate 243, and threonine 275 together coordinate substrate. Aspartate 243 contacts Mg(2+).

It belongs to the pyruvate kinase family. Homotetramer. Mg(2+) serves as cofactor. The cofactor is K(+).

It carries out the reaction pyruvate + ATP = phosphoenolpyruvate + ADP + H(+). The protein operates within carbohydrate degradation; glycolysis; pyruvate from D-glyceraldehyde 3-phosphate: step 5/5. The sequence is that of Pyruvate kinase (pyk) from Methylorubrum extorquens (strain ATCC 14718 / DSM 1338 / JCM 2805 / NCIMB 9133 / AM1) (Methylobacterium extorquens).